The chain runs to 109 residues: Large ribosomal subunit protein uL22 (109 aa).

The protein belongs to the universal ribosomal protein uL22 family. In terms of assembly, part of the 50S ribosomal subunit.

Its function is as follows. This protein binds specifically to 23S rRNA; its binding is stimulated by other ribosomal proteins, e.g. L4, L17, and L20. It is important during the early stages of 50S assembly. It makes multiple contacts with different domains of the 23S rRNA in the assembled 50S subunit and ribosome. In terms of biological role, the globular domain of the protein is located near the polypeptide exit tunnel on the outside of the subunit, while an extended beta-hairpin is found that lines the wall of the exit tunnel in the center of the 70S ribosome. The protein is Large ribosomal subunit protein uL22 of Psychrobacter cryohalolentis (strain ATCC BAA-1226 / DSM 17306 / VKM B-2378 / K5).